A 269-amino-acid polypeptide reads, in one-letter code: MRYNIVSKGDHKSNSIKENMEAQMQDTKMIKDTETPEIVISVGGDGTLLEAFHKYSYRLSETAFVGVHTGHLGFYADWLPHESDKLIREIIDGDYEVIKYPLIDITVNYNDEKNPSHHIALNEATMKTEDNTTLVADVSLRGQHFERFRGDGLCISTPSGSTAYNKALGGALIHPSLRAIQLTEIASINNRVFRTVGSPLVLPAHHYCLITPVDQRTIMTSIDHVTTKHHNVKSIEYKVSEEEIRFARFRPFPFWKRVHDSFISDGRDD.

D45 functions as the Proton acceptor in the catalytic mechanism. NAD(+)-binding positions include 45 to 46, 122 to 123, R149, D151, and A186; these read DG and NE.

It belongs to the NAD kinase family. The cofactor is a divalent metal cation.

It is found in the cytoplasm. The catalysed reaction is NAD(+) + ATP = ADP + NADP(+) + H(+). Involved in the regulation of the intracellular balance of NAD and NADP, and is a key enzyme in the biosynthesis of NADP. Catalyzes specifically the phosphorylation on 2'-hydroxyl of the adenosine moiety of NAD to yield NADP. The chain is NAD kinase from Staphylococcus carnosus (strain TM300).